Consider the following 415-residue polypeptide: Tyrosine--tRNA ligase (415 aa).

Position 34 (Tyr34) interacts with L-tyrosine. The 'HIGH' region motif lies at 39 to 48; sequence PSADSLHLGN. L-tyrosine contacts are provided by Tyr162 and Gln166. The 'KMSKS' region motif lies at 224 to 228; it reads KFGKS. Lys227 is a binding site for ATP. The S4 RNA-binding domain occupies 346–413; sequence IKIIDLLNLA…KRNYFLIVWN (68 aa).

It belongs to the class-I aminoacyl-tRNA synthetase family. TyrS type 1 subfamily. In terms of assembly, homodimer.

It localises to the cytoplasm. The enzyme catalyses tRNA(Tyr) + L-tyrosine + ATP = L-tyrosyl-tRNA(Tyr) + AMP + diphosphate + H(+). Its function is as follows. Catalyzes the attachment of tyrosine to tRNA(Tyr) in a two-step reaction: tyrosine is first activated by ATP to form Tyr-AMP and then transferred to the acceptor end of tRNA(Tyr). In Ureaplasma urealyticum serovar 10 (strain ATCC 33699 / Western), this protein is Tyrosine--tRNA ligase.